Consider the following 257-residue polypeptide: Ribosome-inactivating protein charybdin (257 aa).

The active site involves E167. A disulfide bridge connects residues C217 and C254.

The protein belongs to the ribosome-inactivating protein family. Type 1 RIP subfamily.

It carries out the reaction Endohydrolysis of the N-glycosidic bond at one specific adenosine on the 28S rRNA.. Functionally, inhibits translation in rabbit reticulocytes. The protein is Ribosome-inactivating protein charybdin of Drimia maritima (Sea squill).